The sequence spans 377 residues: MKIVVDENMPHALELFAEFGEVIPLPGRQMQAVDLQDADVLLVRSVTRVDAELLATSPRLRFVGTATIGTDHVDKALLAVRNIPFFSAPGCNKYSVGDYVLSTLLVLAERHELNLREMSLAVIGAGNTGECVACKAEALGMRVLRCDPPRARVAGQAGETDAFVDYQTALGADIVSFHVPITREGPDATFHLLDEQVIAARPAGQILVNASRGEVWDNQALLARQQGLEPLRLVMDVWEGEPEPLRALVPHTEIATPHIAGYSLEGKARGTWMLYQALCQQLGRAARQDLQSLLPAPEVRALTPGQPVDQALIKQLVHLIYDVRRDDARFRNRIELPGSFDEQRKHYPERRELSSLHVNGPFASDTLARLGFTVQPG.

2 residues coordinate substrate: Ser-45 and Thr-67. NAD(+)-binding positions include Asp-147, 210 to 212 (ASR), and Asp-236. Arg-212 is an active-site residue. Residue Glu-241 is part of the active site. The active-site Proton donor is His-258. Gly-261 lines the NAD(+) pocket. Tyr-262 lines the substrate pocket.

The protein belongs to the D-isomer specific 2-hydroxyacid dehydrogenase family. PdxB subfamily. Homodimer.

It is found in the cytoplasm. The enzyme catalyses 4-phospho-D-erythronate + NAD(+) = (R)-3-hydroxy-2-oxo-4-phosphooxybutanoate + NADH + H(+). It functions in the pathway cofactor biosynthesis; pyridoxine 5'-phosphate biosynthesis; pyridoxine 5'-phosphate from D-erythrose 4-phosphate: step 2/5. In terms of biological role, catalyzes the oxidation of erythronate-4-phosphate to 3-hydroxy-2-oxo-4-phosphonooxybutanoate. The chain is Erythronate-4-phosphate dehydrogenase from Aeromonas salmonicida (strain A449).